Consider the following 192-residue polypeptide: Ribonuclease HII (192 aa).

The region spanning 2-187 is the RNase H type-2 domain; sequence KNLCGIDEAG…KALGENEIGV (186 aa). The a divalent metal cation site is built by aspartate 8, glutamate 9, and aspartate 97.

The protein belongs to the RNase HII family. Mn(2+) is required as a cofactor. It depends on Mg(2+) as a cofactor.

It is found in the cytoplasm. It catalyses the reaction Endonucleolytic cleavage to 5'-phosphomonoester.. Endonuclease that specifically degrades the RNA of RNA-DNA hybrids. The sequence is that of Ribonuclease HII from Aliarcobacter butzleri (strain RM4018) (Arcobacter butzleri).